Here is a 412-residue protein sequence, read N- to C-terminus: Sexual development regulator umv3 (412 aa).

A disordered region spans residues 1-197 (MSAQDDIDTG…PPLLSDLPRH (197 aa)). 2 stretches are compositionally biased toward polar residues: residues 73 to 93 (RANT…SASS) and 149 to 170 (RQSA…PGST). The span at 171 to 181 (ENERVRMHDQR) shows a compositional bias: basic and acidic residues. The Velvet domain occupies 195–388 (PRHSTDNKTY…ARQGIQVPVR (194 aa)).

The protein belongs to the velvet family. VelC subfamily.

Its subcellular location is the nucleus. In terms of biological role, velvet-domain-containing protein not required for disease or sexual development on seedlings. The protein is Sexual development regulator umv3 of Mycosarcoma maydis (Corn smut fungus).